Reading from the N-terminus, the 387-residue chain is MGRIGVLLLNLGGPDQLEDVRPFLYNLFSDPEIIRLPFTWLQKPLAWLISTTRARKSQQNYRLIGGGSPLRRITEEQGKALQAHLASQGQDIQVYIGMRYWHPFTEEAIAAIKQDGITRLVILPLYPQFSISTSGSSFRLLEDLWQRDPQLQAIDYTVIPSWYDRPGYTQAMAELLREELDHFAEPDRVTIFFSAHGVPLSYVTEAGDPYQAEIEGCTALIMQALNRPNPHVLAYQSRVGPVEWLKPYTEEVIPELASQGVNELVVVPISFISEHIETLQEIDMEYRELAEEAGIEHFRRVPALNTHPLFIADLSQLVLEALQGPSRKFDQVVRPQKQVKLYPQERWEWGMTSAAERWNGRLAMLGFLALLLELITGRGPLHLVGLL.

Residues His196 and Glu277 each contribute to the Fe cation site.

It belongs to the ferrochelatase family.

Its subcellular location is the cytoplasm. The enzyme catalyses heme b + 2 H(+) = protoporphyrin IX + Fe(2+). Its pathway is porphyrin-containing compound metabolism; protoheme biosynthesis; protoheme from protoporphyrin-IX: step 1/1. Catalyzes the ferrous insertion into protoporphyrin IX. This is Ferrochelatase from Cyanothece sp. (strain PCC 7425 / ATCC 29141).